We begin with the raw amino-acid sequence, 543 residues long: Chaperonin GroEL (543 aa).

ATP is bound by residues 29-32, 86-90, Gly-413, 478-480, and Asp-494; these read TIGP, DGTTT, and NAA.

It belongs to the chaperonin (HSP60) family. Forms a cylinder of 14 subunits composed of two heptameric rings stacked back-to-back. Interacts with the co-chaperonin GroES.

The protein localises to the cytoplasm. It catalyses the reaction ATP + H2O + a folded polypeptide = ADP + phosphate + an unfolded polypeptide.. Its function is as follows. Together with its co-chaperonin GroES, plays an essential role in assisting protein folding. The GroEL-GroES system forms a nano-cage that allows encapsulation of the non-native substrate proteins and provides a physical environment optimized to promote and accelerate protein folding. This chain is Chaperonin GroEL, found in Limosilactobacillus fermentum (strain NBRC 3956 / LMG 18251) (Lactobacillus fermentum).